The primary structure comprises 355 residues: Green-sensitive opsin (355 aa).

At 1–36 the chain is on the extracellular side; sequence MNGTEGINFYVPMSNKTGVVRSPFEYPQYYLAEPWK. N-linked (GlcNAc...) asparagine glycosylation is found at Asn2 and Asn15. A helical transmembrane segment spans residues 37–61; it reads YRLVCCYIFFLISTGLPINLLTLLV. Topologically, residues 62–73 are cytoplasmic; the sequence is TFKHKKLRQPLN. Residues 74–99 traverse the membrane as a helical segment; the sequence is YILVNLAVADLFMACFGFTVTFYTAW. Topologically, residues 100 to 113 are extracellular; that stretch reads NGYFVFGPVGCAVE. Cysteines 110 and 187 form a disulfide. The helical transmembrane segment at 114 to 133 threads the bilayer; that stretch reads GFFATLGGQVALWSLVVLAI. The Cytoplasmic segment spans residues 134–152; the sequence is ERYIVVCKPMGNFRFSATH. The helical transmembrane segment at 153-176 threads the bilayer; the sequence is AMMGIAFTWVMAFSCAAPPLFGWS. The Extracellular portion of the chain corresponds to 177–202; that stretch reads RYMPEGMQCSCGPDYYTHNPDYHNES. The helical transmembrane segment at 203–230 threads the bilayer; the sequence is YVLYMFVIHFIIPVVVIFFSYGRLICKV. Topologically, residues 231–252 are cytoplasmic; sequence REAAAQQQESATTQKAEKEVTR. A helical transmembrane segment spans residues 253–276; the sequence is MVILMVLGFMLAWTPYAVVAFWIF. Topologically, residues 277–284 are extracellular; that stretch reads TNKGADFT. A helical membrane pass occupies residues 285–309; that stretch reads ATLMAVPAFFSKSSSLYNPIIYVLM. Position 296 is an N6-(retinylidene)lysine (Lys296). Topologically, residues 310 to 355 are cytoplasmic; sequence NKQFRNCMITTICCGKNPFGDEDVSSTVSQSKTEVSSVSSSQVSPA.

The protein belongs to the G-protein coupled receptor 1 family. Opsin subfamily. Phosphorylated on some or all of the serine and threonine residues present in the C-terminal region. The color pigments are found in the cone photoreceptor cells.

Its subcellular location is the membrane. Visual pigments are the light-absorbing molecules that mediate vision. They consist of an apoprotein, opsin, covalently linked to cis-retinal. This chain is Green-sensitive opsin (PRA1), found in Gallus gallus (Chicken).